The following is a 147-amino-acid chain: 3-dehydroquinate dehydratase (147 aa).

The active-site Proton acceptor is Tyr-23. 3 residues coordinate substrate: Asn-75, His-81, and Asp-88. The active-site Proton donor is His-101. Residues 102–103 (LS) and Arg-112 contribute to the substrate site.

The protein belongs to the type-II 3-dehydroquinase family. As to quaternary structure, homododecamer.

It carries out the reaction 3-dehydroquinate = 3-dehydroshikimate + H2O. It functions in the pathway metabolic intermediate biosynthesis; chorismate biosynthesis; chorismate from D-erythrose 4-phosphate and phosphoenolpyruvate: step 3/7. In terms of biological role, catalyzes a trans-dehydration via an enolate intermediate. In Nitrosococcus oceani (strain ATCC 19707 / BCRC 17464 / JCM 30415 / NCIMB 11848 / C-107), this protein is 3-dehydroquinate dehydratase.